We begin with the raw amino-acid sequence, 466 residues long: Hydroxyproline dehydrogenase (466 aa).

The protein belongs to the proline oxidase family. Requires FAD as cofactor.

The catalysed reaction is trans-4-hydroxy-L-proline + a quinone = (3R,5S)-1-pyrroline-3-hydroxy-5-carboxylate + a quinol + H(+). It carries out the reaction L-proline + a quinone = (S)-1-pyrroline-5-carboxylate + a quinol + H(+). The protein operates within amino-acid degradation; L-proline degradation into L-glutamate; L-glutamate from L-proline: step 1/2. Dehydrogenase that converts trans-4-L-hydroxyproline to delta-1-pyrroline-3-hydroxy-5-carboxylate (Hyp) using a quinone as the terminal electron acceptor. Can also use proline as a substrate but with a very much lower efficiency. Does not react with other diastereomers of Hyp: trans-4-D-hydroxyproline and cis-4-L-hydroxyproline. This chain is Hydroxyproline dehydrogenase (prodh2), found in Xenopus laevis (African clawed frog).